The primary structure comprises 91 residues: Large ribosomal subunit protein eL31 (91 aa).

The protein belongs to the eukaryotic ribosomal protein eL31 family.

This chain is Large ribosomal subunit protein eL31, found in Pyrobaculum neutrophilum (strain DSM 2338 / JCM 9278 / NBRC 100436 / V24Sta) (Thermoproteus neutrophilus).